A 295-amino-acid polypeptide reads, in one-letter code: Zinc finger CCCH domain-containing protein 44 (295 aa).

The interval 1-31 is disordered; it reads MEAGGGKRAAPEGTNGAAKRARASESSQVGV. 2 consecutive C3H1-type zinc fingers follow at residues 32 to 60 and 98 to 126; these read GSKL…HNFP and SVKT…HGER. Residues 166 to 230 enclose the KH domain; the sequence is SATAKISVDA…DQIKHASAMV (65 aa). The C3H1-type 3 zinc finger occupies 259–286; the sequence is NFKTKLCENFNKGSCTFGDRCHFAHGES.

The polypeptide is Zinc finger CCCH domain-containing protein 44 (Oryza sativa subsp. japonica (Rice)).